The chain runs to 431 residues: Serine hydroxymethyltransferase 3 (431 aa).

(6S)-5,6,7,8-tetrahydrofolate is bound by residues L131 and 135–137 (GHL). Residue K240 is modified to N6-(pyridoxal phosphate)lysine.

It belongs to the SHMT family. Homodimer. It depends on pyridoxal 5'-phosphate as a cofactor.

It localises to the cytoplasm. It carries out the reaction (6R)-5,10-methylene-5,6,7,8-tetrahydrofolate + glycine + H2O = (6S)-5,6,7,8-tetrahydrofolate + L-serine. Its pathway is one-carbon metabolism; tetrahydrofolate interconversion. The protein operates within amino-acid biosynthesis; glycine biosynthesis; glycine from L-serine: step 1/1. Functionally, catalyzes the reversible interconversion of serine and glycine with tetrahydrofolate (THF) serving as the one-carbon carrier. This reaction serves as the major source of one-carbon groups required for the biosynthesis of purines, thymidylate, methionine, and other important biomolecules. Also exhibits THF-independent aldolase activity toward beta-hydroxyamino acids, producing glycine and aldehydes, via a retro-aldol mechanism. The polypeptide is Serine hydroxymethyltransferase 3 (Colwellia psychrerythraea (strain 34H / ATCC BAA-681) (Vibrio psychroerythus)).